The sequence spans 709 residues: Nucleobase-ascorbate transporter 11 (709 aa).

Disordered stretches follow at residues 1–28 (MDSG…YGER) and 58–167 (TGFV…SEDG). Residues 15 to 25 (KGNGSGGGNGY) are compositionally biased toward gly residues. Over residues 65–74 (SGETSTSTRT) the composition is skewed to polar residues. Composition is skewed to basic and acidic residues over residues 75–89 (KFGE…KGRD), 108–132 (NRPE…RLNR), and 142–151 (EGGKINKDLE). 12 helical membrane passes run 196 to 216 (YLSL…AMDG), 222 to 242 (ASVI…HCYF), 246 to 266 (LPLV…VINS), 288 to 308 (IIVG…SLLL), 310 to 330 (FINP…FFSY), 336 to 356 (GTCV…TLYL), 369 to 389 (IYAV…LTVG), 454 to 474 (IIMI…YHSA), 532 to 552 (LVIG…GAIL), 555 to 575 (IPQA…VSLG), 590 to 610 (ITIV…FQQY), and 642 to 662 (FAMN…AFIL).

Belongs to the nucleobase:cation symporter-2 (NCS2) (TC 2.A.40) family. In terms of tissue distribution, expressed in leaf primordia and vasculature of pedicels, rosette leaves, sepals, carpels and siliques. Expressed in the root central cylinder.

It localises to the membrane. The sequence is that of Nucleobase-ascorbate transporter 11 (NAT11) from Arabidopsis thaliana (Mouse-ear cress).